The sequence spans 595 residues: Coronatine-insensitive protein homolog 1a (595 aa).

One can recognise an F-box domain in the interval 20–62 (WVPDEALHLVMGHVEDPRDREAASRVCRRWHRIDALTRKHVTV). The jasmonate site is built by Arg-90, Arg-351, Tyr-389, Arg-412, and Arg-499.

Interacts with TIFY6A/JAZ3, TIFY6B/JAZ4 and TIFY11D/JAZ12 in a coronatine-dependent manner. Interacts with TIFY9/JAZ5, TIFY10A/JAZ6, TIFY10B/JAZ7, TIFY11A/JAZ9 and TIFY11C/JAZ11 in a coronatine-dependent manner.

In terms of biological role, involved in jasmonate (JA) signaling. Required for jasmonate signaling in plant defense responses. Can complement Arabidopsis coi1-1 mutant and restore jasmonate signaling. Required for JA-regulated defense responses to infestation by the leaffolder Cnaphalocrocis medinalis. May act on an initial response of jasmonate-regulated gene expression toward drought tolerance as part of a BHLH148-TIFY11D/JAZ12-COI1A complex. Component of SCF(COI1) E3 ubiquitin ligase complexes, which may mediate the ubiquitination and subsequent proteasomal degradation of target proteins, including TIFY/JAZ family. The sequence is that of Coronatine-insensitive protein homolog 1a from Oryza sativa subsp. indica (Rice).